A 196-amino-acid chain; its full sequence is DNA replication complex GINS protein PSF1 (196 aa).

Belongs to the GINS1/PSF1 family. In terms of assembly, component of the GINS complex which is a heterotetramer of gins1/psf1, gins2/psf2, gins3/psf3 and gins4/sld5. Component of the CMG helicase complex, composed of the mcm2-7 complex, the GINS complex and cdc45.

It is found in the nucleus. Its subcellular location is the chromosome. Required for correct functioning of the GINS complex, a complex that plays an essential role in the initiation of DNA replication, and progression of DNA replication forks. GINS complex is a core component of CDC45-MCM-GINS (CMG) helicase, the molecular machine that unwinds template DNA during replication, and around which the replisome is built. The polypeptide is DNA replication complex GINS protein PSF1 (Xenopus laevis (African clawed frog)).